The following is a 425-amino-acid chain: Adenylosuccinate synthetase (425 aa).

GTP-binding positions include 12-18 (GDEGKGK) and 40-42 (GHT). Asp-13 functions as the Proton acceptor in the catalytic mechanism. Positions 13 and 40 each coordinate Mg(2+). IMP contacts are provided by residues 13-16 (DEGK), 38-41 (NAGH), Thr-130, Arg-144, Gln-224, Thr-239, and Arg-301. His-41 (proton donor) is an active-site residue. 297 to 303 (TVSNRRR) serves as a coordination point for substrate. Residues Arg-303, 329–331 (KLD), and 411–413 (STS) each bind GTP.

This sequence belongs to the adenylosuccinate synthetase family. Homodimer. Mg(2+) is required as a cofactor.

It localises to the cytoplasm. The enzyme catalyses IMP + L-aspartate + GTP = N(6)-(1,2-dicarboxyethyl)-AMP + GDP + phosphate + 2 H(+). Its pathway is purine metabolism; AMP biosynthesis via de novo pathway; AMP from IMP: step 1/2. Plays an important role in the de novo pathway of purine nucleotide biosynthesis. Catalyzes the first committed step in the biosynthesis of AMP from IMP. The polypeptide is Adenylosuccinate synthetase (Wolbachia pipientis wMel).